Here is a 327-residue protein sequence, read N- to C-terminus: Biotin synthase (327 aa).

A Radical SAM core domain is found at 49–275; the sequence is RFGREVSLCS…VNPHAEVRMA (227 aa). [4Fe-4S] cluster contacts are provided by C67, C71, and C74. Residues S112, C143, C203, and R273 each contribute to the [2Fe-2S] cluster site.

This sequence belongs to the radical SAM superfamily. Biotin synthase family. In terms of assembly, homodimer. It depends on [4Fe-4S] cluster as a cofactor. Requires [2Fe-2S] cluster as cofactor.

It catalyses the reaction (4R,5S)-dethiobiotin + (sulfur carrier)-SH + 2 reduced [2Fe-2S]-[ferredoxin] + 2 S-adenosyl-L-methionine = (sulfur carrier)-H + biotin + 2 5'-deoxyadenosine + 2 L-methionine + 2 oxidized [2Fe-2S]-[ferredoxin]. It functions in the pathway cofactor biosynthesis; biotin biosynthesis; biotin from 7,8-diaminononanoate: step 2/2. Functionally, catalyzes the conversion of dethiobiotin (DTB) to biotin by the insertion of a sulfur atom into dethiobiotin via a radical-based mechanism. This Maridesulfovibrio salexigens (strain ATCC 14822 / DSM 2638 / NCIMB 8403 / VKM B-1763) (Desulfovibrio salexigens) protein is Biotin synthase.